The following is a 113-amino-acid chain: Large ribosomal subunit protein bL17 (113 aa).

It belongs to the bacterial ribosomal protein bL17 family. Part of the 50S ribosomal subunit. Contacts protein L32.

In Clostridium botulinum (strain Loch Maree / Type A3), this protein is Large ribosomal subunit protein bL17.